We begin with the raw amino-acid sequence, 631 residues long: Mitochondrial Rho GTPase 1 (631 aa).

Residues 1–605 (MPAGRGRPLR…TQADLKSSTF (605 aa)) lie on the Cytoplasmic side of the membrane. In terms of domain architecture, Miro 1 spans 15–181 (KKDVRILLVG…FYYAQKAVLH (167 aa)). Residues R27, G29, K30, T31, and S32 each coordinate GTP. T31 lines the Mg(2+) pocket. Positions 48 and 70 each coordinate Mg(2+). S72 is a GTP binding site. N6-acetyllysine is present on K105. N131, K132, D134, A162, and K163 together coordinate GTP. K166 participates in a covalent cross-link: Glycyl lysine isopeptide (Lys-Gly) (interchain with G-Cter in ubiquitin). Positions 197–232 (ACIKALTRIFKISDQDNDGTLNDAELNFFQRICFNT) constitute an EF-hand 1 domain. 5 residues coordinate Ca(2+): D210, D212, D214, T216, and E221. A Glycyl lysine isopeptide (Lys-Gly) (interchain with G-Cter in ubiquitin) cross-link involves residue K248. Residues 317–352 (HAYLFLQSTFDKHDLDRDCALSPDELKDLFKVFPYI) form the EF-hand 2 domain. Positions 330, 332, 334, 336, and 341 each coordinate Ca(2+). A Miro 2 domain is found at 429 to 592 (RNVFRCNVIG…FVKLTTMAMY (164 aa)). Residues N441, C442, G443, K444, S445, G446, K460, K541, D543, T571, and C572 each contribute to the GTP site. N441 contributes to the Mg(2+) binding site. Residue K585 forms a Glycyl lysine isopeptide (Lys-Gly) (interchain with G-Cter in ubiquitin) linkage. A helical; Anchor for type IV membrane protein transmembrane segment spans residues 606 to 628 (WLRASFGATVFAVLGFAMYKALL). Topologically, residues 629-631 (KQR) are mitochondrial intermembrane.

The protein belongs to the mitochondrial Rho GTPase family. Homodimer. Interacts with the kinesin-binding proteins TRAK1/OIP106 and TRAK2/GRIF1, forming a link between mitochondria and the trafficking apparatus of the microtubules. Interacts with RAP1GDS1. Interacts with ARMCX1. Found in a complex with KIF5B, OGT, RHOT2 and TRAK1. Post-translationally, ubiquitinated by PRKN during mitophagy, leading to its degradation and enhancement of mitophagy. Deubiquitinated by USP30. In terms of processing, acetylation on Lys-105 decreases sensitivity of mitochondrial transport to elevated Ca(2+) levels, increases mitochondrial transport and promotes axon growth. Deacetylated by HDAC6 which blocks mitochondrial transport and mediates axon growth inhibition.

The protein resides in the mitochondrion outer membrane. The enzyme catalyses GTP + H2O = GDP + phosphate + H(+). It carries out the reaction ATP + H2O = ADP + phosphate + H(+). It catalyses the reaction UTP + H2O = UDP + phosphate + H(+). Atypical mitochondrial nucleoside-triphosphatase (NTPase) involved in mitochondrial trafficking. Probably involved in control of anterograde transport of mitochondria and their subcellular distribution. Promotes mitochondrial fission during high calcium conditions. Can hydrolyze GTP, ATP and UTP. The protein is Mitochondrial Rho GTPase 1 (RHOT1) of Bos taurus (Bovine).